Consider the following 536-residue polypeptide: MLIEERLLTLFKRNCQHTLTYWSVFFSFGLSIAFLGPTILDLKCRTGSTLQEITWVFFAQQLCLLIGSSSGGAFTKTLFSALLALFLSSLIISVVFSIIPLCYNVLLLAIAMAVSGLAMGIIDTIANIQLVSIYKKDSPIFLQALHFFIGLGALLSPLIAEPFISGHCLRSNSTENATEIIHHFRSSFRSPVNLPESSPLSGPVEERNVSYAFWIMALINLPVPIAVFVLMYQEKLLPFCPNSSPRLLDKDELAMETKAPDNTEMAELDDEVFLHSGHGNIFSCCTDGALRGLPVTFFLIHIFGGMVLFMTEGIMGVYAGFVYTYAVSPPMSLQSKMAGNLNCIFWAAITAGRLVSIPLSYRFKTVHLLLTNMAGVIVTLLLLMILYTNRVFLFVGTTFLGLFISSVFPCLVAYTEDILEYRGCATTVLVTLSGMGEMTLQVLAGTLIQKKGSYSFLVCGLVIGCLGFIFLLSVILSNHFHRKITGASKKAEITDGPAAPAPEKTAPEHKTAVIQPECIKCDFGLDHNGSKPAENT.

12 helical membrane-spanning segments follow: residues 19–39 (LTYW…GPTI), 53–73 (ITWV…SGGA), 81–101 (ALLA…IIPL), 105–125 (VLLL…IDTI), 140–160 (IFLQ…PLIA), 211–231 (YAFW…FVLM), 297–317 (FFLI…IMGV), 341–361 (LNCI…PLSY), 366–386 (VHLL…LMIL), 391–411 (VFLF…FPCL), 428–448 (VLVT…GTLI), and 456–476 (FLVC…SVIL).

Belongs to the major facilitator superfamily.

Its subcellular location is the membrane. This Danio rerio (Zebrafish) protein is Major facilitator superfamily domain-containing protein 4B.